Reading from the N-terminus, the 390-residue chain is Oxysterol-binding protein 10 (390 aa).

Belongs to the OSBP family.

This chain is Oxysterol-binding protein 10 (osbJ), found in Dictyostelium discoideum (Social amoeba).